We begin with the raw amino-acid sequence, 61 residues long: uncharacterized protein (61 aa).

The disordered stretch occupies residues 1 to 40; that stretch reads MRRGGEPQCDGREFRIASSPAREREDDNETAPPQTSAAQE. Residues 9–25 are compositionally biased toward basic and acidic residues; it reads CDGREFRIASSPARERE.

This is an uncharacterized protein from Caenorhabditis elegans.